A 395-amino-acid chain; its full sequence is Biotin biosynthesis cytochrome P450 (395 aa).

Arg60 provides a ligand contact to substrate. 89 to 93 (HRRLR) is a heme binding site. 169–173 (IDFTR) is a binding site for substrate. Cys250 and Cys275 are oxidised to a cystine. Residue 285 to 287 (TAR) participates in heme binding. Tyr307 provides a ligand contact to substrate. Residues 343 to 345 (HVC) and Cys345 each bind heme.

It depends on heme as a cofactor.

The enzyme catalyses a C2-C8-saturated long-chain fatty acyl-[ACP] + 2 reduced [flavodoxin] + 3 O2 = 6-carboxyhexanoyl-[ACP] + a fatty aldehyde + 2 oxidized [flavodoxin] + 3 H2O + 3 H(+). It functions in the pathway cofactor biosynthesis; biotin biosynthesis. Functionally, catalyzes the C-C bond cleavage of fatty acid linked to acyl carrier protein (ACP) to generate pimelic acid for biotin biosynthesis. It has high affinity for long-chain fatty acids with the greatest affinity for myristic acid. The polypeptide is Biotin biosynthesis cytochrome P450 (bioI) (Bacillus subtilis (strain 168)).